The sequence spans 161 residues: Cyclic pyranopterin monophosphate synthase (161 aa).

Substrate-binding positions include 75–77 and 113–114; these read LCH and ME. Asp-128 is a catalytic residue.

This sequence belongs to the MoaC family. Homohexamer; trimer of dimers.

The catalysed reaction is (8S)-3',8-cyclo-7,8-dihydroguanosine 5'-triphosphate = cyclic pyranopterin phosphate + diphosphate. It functions in the pathway cofactor biosynthesis; molybdopterin biosynthesis. Functionally, catalyzes the conversion of (8S)-3',8-cyclo-7,8-dihydroguanosine 5'-triphosphate to cyclic pyranopterin monophosphate (cPMP). This Cronobacter sakazakii (strain ATCC BAA-894) (Enterobacter sakazakii) protein is Cyclic pyranopterin monophosphate synthase.